A 185-amino-acid polypeptide reads, in one-letter code: Der GTPase-activating protein YihI (185 aa).

2 disordered regions span residues 1–74 (MGRS…KKKI) and 145–169 (EPED…SSDE). Over residues 23-33 (NRSESDVEGRE) the composition is skewed to basic and acidic residues. The segment covering 34 to 47 (RKRVKKRKGLKSGS) has biased composition (basic residues). Over residues 48–68 (RHSDGSEAKQRKAALARDPRL) the composition is skewed to basic and acidic residues. A compositionally biased stretch (acidic residues) spans 145-155 (EPEDDEEEIFE).

The protein belongs to the YihI family. Interacts with Der.

Functionally, a GTPase-activating protein (GAP) that modifies Der/EngA GTPase function. May play a role in ribosome biogenesis. The sequence is that of Der GTPase-activating protein YihI from Vibrio atlanticus (strain LGP32) (Vibrio splendidus (strain Mel32)).